We begin with the raw amino-acid sequence, 301 residues long: tRNA pseudouridine synthase B (301 aa).

Aspartate 47 (nucleophile) is an active-site residue.

This sequence belongs to the pseudouridine synthase TruB family. Type 1 subfamily.

It catalyses the reaction uridine(55) in tRNA = pseudouridine(55) in tRNA. Functionally, responsible for synthesis of pseudouridine from uracil-55 in the psi GC loop of transfer RNAs. The chain is tRNA pseudouridine synthase B from Cereibacter sphaeroides (strain ATCC 17025 / ATH 2.4.3) (Rhodobacter sphaeroides).